The chain runs to 236 residues: tRNA (guanine-N(1)-)-methyltransferase (236 aa).

S-adenosyl-L-methionine contacts are provided by residues G112 and 132-137 (VGDFIL).

This sequence belongs to the RNA methyltransferase TrmD family. As to quaternary structure, homodimer.

Its subcellular location is the cytoplasm. The catalysed reaction is guanosine(37) in tRNA + S-adenosyl-L-methionine = N(1)-methylguanosine(37) in tRNA + S-adenosyl-L-homocysteine + H(+). In terms of biological role, specifically methylates guanosine-37 in various tRNAs. The chain is tRNA (guanine-N(1)-)-methyltransferase from Campylobacter curvus (strain 525.92).